The primary structure comprises 487 residues: Glutamate--tRNA ligase (487 aa).

A 'HIGH' region motif is present at residues 11 to 21; that stretch reads PSPTGYPHLGN. Zn(2+)-binding residues include cysteine 108, cysteine 110, cysteine 135, and aspartate 137. A 'KMSKS' region motif is present at residues 245–249; sequence KLSKR. An ATP-binding site is contributed by lysine 248.

The protein belongs to the class-I aminoacyl-tRNA synthetase family. Glutamate--tRNA ligase type 1 subfamily. Monomer. The cofactor is Zn(2+).

It localises to the cytoplasm. It catalyses the reaction tRNA(Glu) + L-glutamate + ATP = L-glutamyl-tRNA(Glu) + AMP + diphosphate. Functionally, catalyzes the attachment of glutamate to tRNA(Glu) in a two-step reaction: glutamate is first activated by ATP to form Glu-AMP and then transferred to the acceptor end of tRNA(Glu). This chain is Glutamate--tRNA ligase, found in Dehalococcoides mccartyi (strain CBDB1).